The chain runs to 239 residues: MPKSKRDKKVSLTKTAKKGLELKQNLIEELRKCVDTYKYLFIFSVANMRNSKLKDIRNAWKHSRMFFGKNKVMMVALGRSPSDEYKDNLHQVSKKLRGEVGLLFTNRTKEEVDEWFTKYTEMDYARAGNKATFTVNLDPGPLEQFPHSMEPQLRQLGLPTALKKGVVTLLSDYEVCKEGDVLTPEQARVLKLFGYEMAEFKVSIKYMWDAQSGRFQQMGDDLPESAPESEGESEEEDDS.

A disordered region spans residues 216-239 (QQMGDDLPESAPESEGESEEEDDS). Residues 221–239 (DLPESAPESEGESEEEDDS) show a composition bias toward acidic residues. Residues S225, S229, and S233 each carry the phosphoserine modification.

It belongs to the universal ribosomal protein uL10 family. As to quaternary structure, associates with the pre-60S ribosomal particle. Interacts with MINAS-60 (product of an alternative open reading frame of RBM10).

Its subcellular location is the nucleus. It is found in the nucleolus. The protein resides in the cytoplasm. Functionally, component of the ribosome assembly machinery. Nuclear paralog of the ribosomal protein P0, it binds pre-60S subunits at an early stage of assembly in the nucleolus, and is replaced by P0 in cytoplasmic pre-60S subunits and mature 80S ribosomes. The protein is mRNA turnover protein 4 homolog (MRTO4) of Bos taurus (Bovine).